Reading from the N-terminus, the 729-residue chain is Fatty acid oxidation complex subunit alpha (729 aa).

Residues 1–189 (MLYQGESLYL…KVGLVQAVVA (189 aa)) are enoyl-CoA hydratase/isomerase. Aspartate 296 serves as a coordination point for substrate. Positions 311 to 729 (PVPQQAAVLG…HADVSHGQPA (419 aa)) are 3-hydroxyacyl-CoA dehydrogenase. NAD(+) contacts are provided by residues methionine 324, aspartate 343, 400–402 (VVE), lysine 407, and serine 429. Histidine 450 (for 3-hydroxyacyl-CoA dehydrogenase activity) is an active-site residue. Asparagine 453 is an NAD(+) binding site. Substrate contacts are provided by asparagine 500 and tyrosine 660.

It in the N-terminal section; belongs to the enoyl-CoA hydratase/isomerase family. The protein in the C-terminal section; belongs to the 3-hydroxyacyl-CoA dehydrogenase family. Heterotetramer of two alpha chains (FadB) and two beta chains (FadA).

The catalysed reaction is a (3S)-3-hydroxyacyl-CoA + NAD(+) = a 3-oxoacyl-CoA + NADH + H(+). It catalyses the reaction a (3S)-3-hydroxyacyl-CoA = a (2E)-enoyl-CoA + H2O. The enzyme catalyses a 4-saturated-(3S)-3-hydroxyacyl-CoA = a (3E)-enoyl-CoA + H2O. It carries out the reaction (3S)-3-hydroxybutanoyl-CoA = (3R)-3-hydroxybutanoyl-CoA. The catalysed reaction is a (3Z)-enoyl-CoA = a 4-saturated (2E)-enoyl-CoA. It catalyses the reaction a (3E)-enoyl-CoA = a 4-saturated (2E)-enoyl-CoA. The protein operates within lipid metabolism; fatty acid beta-oxidation. Involved in the aerobic and anaerobic degradation of long-chain fatty acids via beta-oxidation cycle. Catalyzes the formation of 3-oxoacyl-CoA from enoyl-CoA via L-3-hydroxyacyl-CoA. It can also use D-3-hydroxyacyl-CoA and cis-3-enoyl-CoA as substrate. In Pectobacterium atrosepticum (strain SCRI 1043 / ATCC BAA-672) (Erwinia carotovora subsp. atroseptica), this protein is Fatty acid oxidation complex subunit alpha.